Consider the following 473-residue polypeptide: C3a anaphylatoxin chemotactic receptor (473 aa).

Topologically, residues 1–23 (MESFTADTNSTDLHSRPLFKPQD) are extracellular. Asn9 is a glycosylation site (N-linked (GlcNAc...) asparagine). The helical transmembrane segment at 24 to 46 (IASMVILSLTCLLGLPGNGLVLW) threads the bilayer. Topologically, residues 47–57 (VAGVKMKRTVN) are cytoplasmic. Residues 58–80 (TVWFLHLTLADFLCCLSLPFSVA) form a helical membrane-spanning segment. Topologically, residues 81–96 (HLILRGHWPYGLFLCK) are extracellular. Cys95 and Cys172 are oxidised to a cystine. The helical transmembrane segment at 97–118 (LIPSVIILNMFASVFLLTAISL) threads the bilayer. Residues 119-139 (DRCLMVHKPIWCQNHRSVRTA) lie on the Cytoplasmic side of the membrane. A helical membrane pass occupies residues 140 to 160 (FAVCGCVWVVTFVMCIPVFVY). Residues 161–329 (RDLLVVDDYS…TPQVAITISR (169 aa)) are Extracellular-facing. A sulfotyrosine mark is found at Tyr174 and Tyr184. Asn201 carries N-linked (GlcNAc...) asparagine glycosylation. The disordered stretch occupies residues 233 to 252 (FHTSPEDPFSQDSASQQPHY). At Tyr308 the chain carries Sulfotyrosine. A helical transmembrane segment spans residues 330–349 (LVVGFLVPFFIMITCYSLIV). Topologically, residues 350–366 (FRMRKTNLTKSRNKTLR) are cytoplasmic. The chain crosses the membrane as a helical span at residues 367 to 389 (VAVAVVTVFFVCWIPYHIVGILL). At 390-406 (VITDQESALREVVLPWD) the chain is on the extracellular side. Residues 407-427 (HMSIALASANSCFNPFLYALL) form a helical membrane-spanning segment. Topologically, residues 428–473 (GKDFRKKARQSVKGILEAAFSEELTHSTSCTQDKAPSKRNHMSTDV) are cytoplasmic. Ser448 carries the phosphoserine modification. Phosphothreonine is present on Thr452.

The protein belongs to the G-protein coupled receptor 1 family. Interacts with VGF-derived peptide TLQP-21.

The protein localises to the cell membrane. Functionally, receptor for the chemotactic and inflammatory peptide anaphylatoxin C3a. This receptor stimulates chemotaxis, granule enzyme release and superoxide anion production. The chain is C3a anaphylatoxin chemotactic receptor (C3ar1) from Rattus norvegicus (Rat).